Here is a 55-residue protein sequence, read N- to C-terminus: uncharacterized protein (55 aa).

This is an uncharacterized protein from Mycobacterium tuberculosis (strain ATCC 25618 / H37Rv).